Here is a 704-residue protein sequence, read N- to C-terminus: D-(-)-3-hydroxybutyrate oligomer hydrolase (704 aa).

The N-terminal stretch at 1–31 is a signal peptide; sequence MTTTNRNNLKLTALTAAVLTLSACGGSDAVA. Ser309 acts as the Charge relay system in catalysis.

The protein belongs to the D-(-)-3-hydroxybutyrate oligomer hydrolase family.

The protein localises to the secreted. The enzyme catalyses (3R)-hydroxybutanoate dimer + H2O = 2 (R)-3-hydroxybutanoate + H(+). Its pathway is lipid metabolism; butanoate metabolism. Functionally, participates in the degradation of poly-3-hydroxybutyrate (PHB). It works downstream of poly(3-hydroxybutyrate) depolymerase, hydrolyzing D(-)-3-hydroxybutyrate oligomers of various length (3HB-oligomers) into 3HB-monomers. This chain is D-(-)-3-hydroxybutyrate oligomer hydrolase, found in Albidiferax ferrireducens (strain ATCC BAA-621 / DSM 15236 / T118) (Rhodoferax ferrireducens).